Here is a 359-residue protein sequence, read N- to C-terminus: Photosystem II protein D1 1 (359 aa).

3 consecutive transmembrane segments (helical) span residues 29–46 (YVGW…AATI), 118–133 (HFLI…EWEL), and 142–156 (WICV…AASA). Histidine 118 lines the chlorophyll a pocket. Tyrosine 126 provides a ligand contact to pheophytin a. [CaMn4O5] cluster-binding residues include aspartate 170 and glutamate 189. A helical transmembrane segment spans residues 197–218 (FHMLGVAGVFGGSLFSAMHGSL). Chlorophyll a is bound at residue histidine 198. Residues histidine 215 and 264-265 (SF) each bind a quinone. Histidine 215 is a binding site for Fe cation. Histidine 272 lines the Fe cation pocket. Residues 274–288 (FLAAWPVVGIWFTAL) form a helical membrane-spanning segment. Histidine 332, glutamate 333, aspartate 342, and alanine 344 together coordinate [CaMn4O5] cluster. Positions 345–359 (AAESTPVALQAPAIG) are excised as a propeptide.

Belongs to the reaction center PufL/M/PsbA/D family. In terms of assembly, PSII is composed of 1 copy each of membrane proteins PsbA, PsbB, PsbC, PsbD, PsbE, PsbF, PsbH, PsbI, PsbJ, PsbK, PsbL, PsbM, PsbT, PsbX, PsbY, PsbZ, Psb30/Ycf12, peripheral proteins PsbO, CyanoQ (PsbQ), PsbU, PsbV and a large number of cofactors. It forms dimeric complexes. The D1/D2 heterodimer binds P680, chlorophylls that are the primary electron donor of PSII, and subsequent electron acceptors. It shares a non-heme iron and each subunit binds pheophytin, quinone, additional chlorophylls, carotenoids and lipids. D1 provides most of the ligands for the Mn4-Ca-O5 cluster of the oxygen-evolving complex (OEC). There is also a Cl(-1) ion associated with D1 and D2, which is required for oxygen evolution. The PSII complex binds additional chlorophylls, carotenoids and specific lipids. serves as cofactor. In terms of processing, tyr-161 forms a radical intermediate that is referred to as redox-active TyrZ, YZ or Y-Z. C-terminally processed by CtpA; processing is essential to allow assembly of the oxygen-evolving complex and thus photosynthetic growth.

The protein resides in the cellular thylakoid membrane. It catalyses the reaction 2 a plastoquinone + 4 hnu + 2 H2O = 2 a plastoquinol + O2. In terms of biological role, photosystem II (PSII) is a light-driven water:plastoquinone oxidoreductase that uses light energy to abstract electrons from H(2)O, generating O(2) and a proton gradient subsequently used for ATP formation. It consists of a core antenna complex that captures photons, and an electron transfer chain that converts photonic excitation into a charge separation. The D1/D2 (PsbA/PsbD) reaction center heterodimer binds P680, the primary electron donor of PSII as well as several subsequent electron acceptors. This Parasynechococcus marenigrum (strain WH8102) protein is Photosystem II protein D1 1.